The primary structure comprises 310 residues: Homoserine kinase (310 aa).

Residue 91 to 101 (PIGSGLGSSAC) participates in ATP binding.

It belongs to the GHMP kinase family. Homoserine kinase subfamily.

It is found in the cytoplasm. The catalysed reaction is L-homoserine + ATP = O-phospho-L-homoserine + ADP + H(+). It functions in the pathway amino-acid biosynthesis; L-threonine biosynthesis; L-threonine from L-aspartate: step 4/5. Catalyzes the ATP-dependent phosphorylation of L-homoserine to L-homoserine phosphate. The chain is Homoserine kinase from Escherichia coli (strain SE11).